Here is a 1891-residue protein sequence, read N- to C-terminus: Endoribonuclease Dicer-L (1891 aa).

The 177-residue stretch at 41 to 217 folds into the Helicase ATP-binding domain; it reads LLEAALDHNT…DLEEKIQKLE (177 aa). Residue 54-61 coordinates ATP; sequence LNSGSGKT. A DECH box motif is present at residues 165 to 168; that stretch reads DECH. Residues 425–594 enclose the Helicase C-terminal domain; the sequence is SFPSPFTNIL…SIDCGNTESE (170 aa). Residues 622 to 714 enclose the Dicer dsRNA-binding fold domain; that stretch reads AIGHINRYCA…MPVGKETVKY (93 aa). Residues 887–1034 form the PAZ domain; it reads KFVEDIEKSE…LVPELCAIHP (148 aa). RNase III domains follow at residues 1248–1379 and 1635–1793; these read TSDM…ETSG and FENF…MDSG. Positions 1292, 1370, 1373, 1674, 1779, and 1782 each coordinate Mg(2+). Residues 1818-1883 form the DRBM domain; the sequence is VPRSPVRELL…ARRALRSLKA (66 aa).

Belongs to the helicase family. Dicer subfamily. In terms of assembly, component of the RISC loading complex (RLC), or micro-RNA (miRNA) loading complex (miRLC), which is composed of dicer1, ago2 and tarbp2; dicer1 and tarbp2 are required to process precursor miRNAs (pre-miRNAs) to mature miRNAs and then load them onto ago2. Note that the trimeric RLC/miRLC is also referred to as RISC. The cofactor is Mg(2+). It depends on Mn(2+) as a cofactor.

It localises to the cytoplasm. The catalysed reaction is Endonucleolytic cleavage to 5'-phosphomonoester.. Its function is as follows. Double-stranded RNA (dsRNA) endoribonuclease playing a central role in short dsRNA-mediated post-transcriptional gene silencing. Cleaves naturally occurring long dsRNAs and short hairpin pre-microRNAs (miRNA) into fragments of 21 to 23 nucleotides with 3' overhang of two nucleotides, producing respectively short interfering RNAs (siRNA) and mature microRNAs. SiRNAs and miRNAs serve as guide to direct the RNA-induced silencing complex (RISC) to complementary RNAs to degrade them or prevent their translation. Gene silencing mediated by siRNAs, also called RNA interference, controls the elimination of transcripts from mobile and repetitive DNA elements of the genome but also the degradation of exogenous RNA of viral origin for instance. The miRNA pathway on the other side is a mean to specifically regulate the expression of target genes. During embryonic development, at the left-right organizer, post-transcriptionally regulates the expression of dand5 in flow sensor cells. In post-flow stages, acts along with Bicc1 to repress dand5 mRNA translation and decay. Decreased Dand5 expression lifts repression of Nodal and defines leftness by induction of the lateral plate mesoderm Nodal signaling cascade. The chain is Endoribonuclease Dicer-L (dicer1.L) from Xenopus laevis (African clawed frog).